We begin with the raw amino-acid sequence, 397 residues long: MAKAKFQRTKPHVNIGTIGHIDHGKTTLTAAITKVLHDRFPDLNPFTPFDQIDKAPEERQRGITISIAHVEYQTEARHYAHVDCPGHADYIKNMITGAAQMDGAILVVAATDGPMPQTKEHVLLARQVGVPYIVVALNKTDMVDDEEILELVELEVRELLTEYEFPGDDVPVVKVSALRALEGDPRWTRSVLELLDAVDEFVPEPVRDVDRPFLMPIEDVFTITGRGTVVTGRIERGTLNVNTEVEIIGIHEQRTRTTVTGIEMFRKLLDEGRAGENVGLLLRGVKREQVERGQVVIRPGSVTPHTQFEAQAYILSKDEGGRHTPFFENYRPQFYFRTTDVTGVVTLPKGTEMVMPGDNTAMHVQLIQPIAMEEGLKFAIREGGRTVGAGQVTRIVK.

The 197-residue stretch at 10–206 folds into the tr-type G domain; it reads KPHVNIGTIG…AVDEFVPEPV (197 aa). Residues 19–26 are G1; that stretch reads GHIDHGKT. Residue 19–26 participates in GTP binding; the sequence is GHIDHGKT. T26 contacts Mg(2+). Residues 62–66 form a G2 region; that stretch reads GITIS. The interval 83–86 is G3; the sequence is DCPG. GTP-binding positions include 83–87 and 138–141; these read DCPGH and NKTD. A G4 region spans residues 138-141; it reads NKTD. Residues 176 to 178 form a G5 region; it reads SAL.

The protein belongs to the TRAFAC class translation factor GTPase superfamily. Classic translation factor GTPase family. EF-Tu/EF-1A subfamily. In terms of assembly, monomer.

It is found in the cytoplasm. The catalysed reaction is GTP + H2O = GDP + phosphate + H(+). GTP hydrolase that promotes the GTP-dependent binding of aminoacyl-tRNA to the A-site of ribosomes during protein biosynthesis. The sequence is that of Elongation factor Tu-2 from Streptomyces ramocissimus.